Consider the following 525-residue polypeptide: GMP synthase [glutamine-hydrolyzing] (525 aa).

The Glutamine amidotransferase type-1 domain maps to 9-207 (RILILDFGSQ…VRDICQCEAL (199 aa)). C86 functions as the Nucleophile in the catalytic mechanism. Residues H181 and E183 contribute to the active site. Residues 208–400 (WTPAKIIDDA…LGLPYDMLYR (193 aa)) enclose the GMPS ATP-PPase domain. Residue 235 to 241 (SGGVDSS) participates in ATP binding.

Homodimer.

It carries out the reaction XMP + L-glutamine + ATP + H2O = GMP + L-glutamate + AMP + diphosphate + 2 H(+). It functions in the pathway purine metabolism; GMP biosynthesis; GMP from XMP (L-Gln route): step 1/1. Its function is as follows. Catalyzes the synthesis of GMP from XMP. The protein is GMP synthase [glutamine-hydrolyzing] of Escherichia coli O17:K52:H18 (strain UMN026 / ExPEC).